The primary structure comprises 460 residues: Argininosuccinate lyase (460 aa).

This sequence belongs to the lyase 1 family. Argininosuccinate lyase subfamily.

It is found in the cytoplasm. It catalyses the reaction 2-(N(omega)-L-arginino)succinate = fumarate + L-arginine. The protein operates within amino-acid biosynthesis; L-arginine biosynthesis; L-arginine from L-ornithine and carbamoyl phosphate: step 3/3. This is Argininosuccinate lyase from Campylobacter hominis (strain ATCC BAA-381 / DSM 21671 / CCUG 45161 / LMG 19568 / NCTC 13146 / CH001A).